Reading from the N-terminus, the 598-residue chain is Elongation factor 4 (598 aa).

A tr-type G domain is found at 4 to 185 (KNIRNFSIIA…TIIAKIPPPK (182 aa)). GTP is bound by residues 16–21 (DHGKST) and 132–135 (NKID).

The protein belongs to the TRAFAC class translation factor GTPase superfamily. Classic translation factor GTPase family. LepA subfamily.

The protein localises to the cell membrane. The enzyme catalyses GTP + H2O = GDP + phosphate + H(+). In terms of biological role, required for accurate and efficient protein synthesis under certain stress conditions. May act as a fidelity factor of the translation reaction, by catalyzing a one-codon backward translocation of tRNAs on improperly translocated ribosomes. Back-translocation proceeds from a post-translocation (POST) complex to a pre-translocation (PRE) complex, thus giving elongation factor G a second chance to translocate the tRNAs correctly. Binds to ribosomes in a GTP-dependent manner. This is Elongation factor 4 from Mycoplasma genitalium (strain ATCC 33530 / DSM 19775 / NCTC 10195 / G37) (Mycoplasmoides genitalium).